Consider the following 118-residue polypeptide: Cell division protein FtsB (118 aa).

Over 1–3 (MRL) the chain is Cytoplasmic. A helical transmembrane segment spans residues 4 to 21 (LFLVLLVLLGLIQYPLWL). Topologically, residues 22 to 118 (GKGGWFKVWD…PRPPATPPRR (97 aa)) are periplasmic. Residues 28–62 (KVWDLQRQVAEQRETNDGLRARNTALEAEVRDLAT) adopt a coiled-coil conformation. Residues 88–118 (LPPGTPLPSGNSTPQASALSKPRPPATPPRR) form a disordered region. The segment covering 95–105 (PSGNSTPQASA) has biased composition (polar residues). Over residues 109-118 (PRPPATPPRR) the composition is skewed to pro residues.

Belongs to the FtsB family. Part of a complex composed of FtsB, FtsL and FtsQ.

It localises to the cell inner membrane. Essential cell division protein. May link together the upstream cell division proteins, which are predominantly cytoplasmic, with the downstream cell division proteins, which are predominantly periplasmic. The protein is Cell division protein FtsB of Bordetella parapertussis (strain 12822 / ATCC BAA-587 / NCTC 13253).